The primary structure comprises 312 residues: Acetyl-coenzyme A carboxylase carboxyl transferase subunit beta (312 aa).

The interval 1 to 52 is disordered; sequence MEMDTAVENPAVEKNGQPTPSSTSTATDAAPTPNAPNRPAPNTAGNRKRGVP. Residues 18-32 show a composition bias toward low complexity; that stretch reads PTPSSTSTATDAAPT. One can recognise a CoA carboxyltransferase N-terminal domain in the interval 55 to 312; sequence VWRKCDSCGA…IATAIDYCGK (258 aa). Positions 59, 62, 78, and 81 each coordinate Zn(2+). The C4-type zinc finger occupies 59 to 81; sequence CDSCGASLFYKEVQQRLNVCPQC.

This sequence belongs to the AccD/PCCB family. In terms of assembly, acetyl-CoA carboxylase is a heterohexamer composed of biotin carboxyl carrier protein (AccB), biotin carboxylase (AccC) and two subunits each of ACCase subunit alpha (AccA) and ACCase subunit beta (AccD). Requires Zn(2+) as cofactor.

The protein resides in the cytoplasm. The enzyme catalyses N(6)-carboxybiotinyl-L-lysyl-[protein] + acetyl-CoA = N(6)-biotinyl-L-lysyl-[protein] + malonyl-CoA. Its pathway is lipid metabolism; malonyl-CoA biosynthesis; malonyl-CoA from acetyl-CoA: step 1/1. Its function is as follows. Component of the acetyl coenzyme A carboxylase (ACC) complex. Biotin carboxylase (BC) catalyzes the carboxylation of biotin on its carrier protein (BCCP) and then the CO(2) group is transferred by the transcarboxylase to acetyl-CoA to form malonyl-CoA. The chain is Acetyl-coenzyme A carboxylase carboxyl transferase subunit beta from Rhodopirellula baltica (strain DSM 10527 / NCIMB 13988 / SH1).